The sequence spans 460 residues: MVFFDSVLKKKCEFIPHEAKKANIYLCGPTVYDDAHLGHARSSVCFDFLRRVLLASGYEVVFARNYTDIDDKILKKMQESGKSLKEITNFYIKRYEEDMQALNILEPDFKPKATAYIEQMITYIEKLLELNLAYKLEDGIYFDTSKDDKYFYISKRNLEDNQSRLEESVAKKNDSDFVLWKFDEKFYPASFGKGRPGWHTECVVMIESIFKDKLDIHAGGIDLLFPHHENEACQCRCKNNHELANFWLHNGFVQINGEKMSKSLGNSFFLKDSLKLFNGEVLRFYLLSVHYRAHFNYALEDLQAAKKRLDKFYRLKKRLNLNAFIDEKTIIESKVSQNILDVLNDDLNASKALALLDEFINESNIYLDQNPKDKAYKIQLEKTLKELSFIFGIGFIDTIKYFQFGISEEKCQEIEEKITLRNKAKQEKNYVLADQIRDDLAKENILLMDTPNGVVWEKNG.

Cys-27 is a Zn(2+) binding site. Positions 29–39 (PTVYDDAHLGH) match the 'HIGH' region motif. Positions 202, 227, and 231 each coordinate Zn(2+). Residues 259–263 (KMSKS) carry the 'KMSKS' region motif. Lys-262 serves as a coordination point for ATP.

This sequence belongs to the class-I aminoacyl-tRNA synthetase family. As to quaternary structure, monomer. It depends on Zn(2+) as a cofactor.

Its subcellular location is the cytoplasm. The enzyme catalyses tRNA(Cys) + L-cysteine + ATP = L-cysteinyl-tRNA(Cys) + AMP + diphosphate. This Campylobacter lari (strain RM2100 / D67 / ATCC BAA-1060) protein is Cysteine--tRNA ligase.